Here is a 230-residue protein sequence, read N- to C-terminus: Probable methylthioribulose-1-phosphate dehydratase (230 aa).

Cysteine 87 serves as a coordination point for substrate. Zn(2+) contacts are provided by histidine 105 and histidine 107. The active-site Proton donor/acceptor is the glutamate 129. Zn(2+) is bound at residue histidine 185.

Belongs to the aldolase class II family. MtnB subfamily. It depends on Zn(2+) as a cofactor.

The protein resides in the cytoplasm. It catalyses the reaction 5-(methylsulfanyl)-D-ribulose 1-phosphate = 5-methylsulfanyl-2,3-dioxopentyl phosphate + H2O. Its pathway is amino-acid biosynthesis; L-methionine biosynthesis via salvage pathway; L-methionine from S-methyl-5-thio-alpha-D-ribose 1-phosphate: step 2/6. In terms of biological role, catalyzes the dehydration of methylthioribulose-1-phosphate (MTRu-1-P) into 2,3-diketo-5-methylthiopentyl-1-phosphate (DK-MTP-1-P). The polypeptide is Probable methylthioribulose-1-phosphate dehydratase (Drosophila pseudoobscura pseudoobscura (Fruit fly)).